Here is a 390-residue protein sequence, read N- to C-terminus: Fer-related kinase 1 (390 aa).

The region spanning 23–119 (YYHGMVPRQD…ASGAKIRRPM (97 aa)) is the SH2 domain. The Protein kinase domain occupies 131–386 (IVANKKLGEG…SIHKKLREFY (256 aa)). ATP-binding positions include 137–145 (LGEGAFGDV) and lysine 161. Residue aspartate 252 is the Proton acceptor of the active site.

This sequence belongs to the protein kinase superfamily. Tyr protein kinase family. Fes/fps subfamily. As to quaternary structure, interacts with hmp-2. Requires Mn(2+) as cofactor.

Its subcellular location is the nucleus. The protein localises to the cytoplasm. It localises to the cell junction. It is found in the cell membrane. The enzyme catalyses L-tyrosyl-[protein] + ATP = O-phospho-L-tyrosyl-[protein] + ADP + H(+). Its function is as follows. Non-receptor tyrosine-protein kinase which plays a role in morphogenesis by regulating the epidermal enclosure of the embryo, independently of its kinase activity. Prevents hyperactivation of the Wnt signaling pathway during endoderm development, probably by preventing hmp-2 nuclear translocation. The chain is Fer-related kinase 1 from Caenorhabditis elegans.